The chain runs to 75 residues: Small ribosomal subunit protein bS21 (75 aa).

The tract at residues Arg-52–Arg-75 is disordered. Residues Arg-53–Ala-62 show a composition bias toward basic residues.

Belongs to the bacterial ribosomal protein bS21 family.

This chain is Small ribosomal subunit protein bS21, found in Brucella anthropi (strain ATCC 49188 / DSM 6882 / CCUG 24695 / JCM 21032 / LMG 3331 / NBRC 15819 / NCTC 12168 / Alc 37) (Ochrobactrum anthropi).